Reading from the N-terminus, the 346-residue chain is tRNA N6-adenosine threonylcarbamoyltransferase (346 aa).

Fe cation is bound by residues histidine 117 and histidine 121. Substrate is bound by residues 139-143, aspartate 172, glycine 185, aspartate 189, and asparagine 278; that span reads VVSGG. Aspartate 307 contacts Fe cation.

The protein belongs to the KAE1 / TsaD family. In terms of assembly, may form a heterodimer with TsaB. The cofactor is Fe(2+).

It localises to the cytoplasm. It carries out the reaction L-threonylcarbamoyladenylate + adenosine(37) in tRNA = N(6)-L-threonylcarbamoyladenosine(37) in tRNA + AMP + H(+). Its function is as follows. Required for the formation of a threonylcarbamoyl group on adenosine at position 37 (t(6)A37) in tRNAs that read codons beginning with adenine. Is involved in the transfer of the threonylcarbamoyl moiety of threonylcarbamoyl-AMP (TC-AMP) to the N6 group of A37, together with TsaE and TsaB; this reaction does not require ATP in vitro. TsaD likely plays a direct catalytic role in this reaction. The sequence is that of tRNA N6-adenosine threonylcarbamoyltransferase from Bacillus subtilis (strain 168).